A 497-amino-acid chain; its full sequence is Protein FAM114A2 (497 aa).

Residues 1 to 54 (MSDKDPPESPVVTGVASTLKDENCEPVEKPEDKSQPVVSTRKRPETKPSSDLEA) form a disordered region. Residues 19-34 (LKDENCEPVEKPEDKS) show a composition bias toward basic and acidic residues. A phosphoserine mark is found at Ser84 and Ser205. The segment at 344–364 (VAEKEEGEKESEAGNTEEAQK) is disordered.

Belongs to the FAM114 family.

The sequence is that of Protein FAM114A2 (Fam114a2) from Mus musculus (Mouse).